Here is a 740-residue protein sequence, read N- to C-terminus: Eukaryotic translation initiation factor 3 subunit B (740 aa).

The span at 1–10 (MAPSFDTLSE) shows a compositional bias: polar residues. Residues 1-20 (MAPSFDTLSEQDLHEEEEEE) are disordered. The RRM domain maps to 40–126 (TFVVIDGLPV…HTLLVNKLMD (87 aa)). WD repeat units lie at residues 193 to 230 (AHWT…KQKQ), 232 to 289 (PHPF…RSFV), 302 to 343 (EPKK…LLGK), 455 to 496 (SLKD…SFFA), 513 to 556 (IEKK…EKPE), and 571 to 609 (IEHY…HTFA). The tract at residues 695–721 (DAYGLPEEADDPKLAKDAAATTQEQGE) is disordered.

This sequence belongs to the eIF-3 subunit B family. As to quaternary structure, component of the eukaryotic translation initiation factor 3 (eIF-3) complex.

The protein localises to the cytoplasm. Its function is as follows. RNA-binding component of the eukaryotic translation initiation factor 3 (eIF-3) complex, which is involved in protein synthesis of a specialized repertoire of mRNAs and, together with other initiation factors, stimulates binding of mRNA and methionyl-tRNAi to the 40S ribosome. The eIF-3 complex specifically targets and initiates translation of a subset of mRNAs involved in cell proliferation. In Neosartorya fischeri (strain ATCC 1020 / DSM 3700 / CBS 544.65 / FGSC A1164 / JCM 1740 / NRRL 181 / WB 181) (Aspergillus fischerianus), this protein is Eukaryotic translation initiation factor 3 subunit B (prt1).